The primary structure comprises 1845 residues: Histone-lysine N-methyltransferase, H3 lysine-79 specific (1845 aa).

The span at 1–44 (MSTNSTPRKQKLSNSKSLQNSPISPTVKKTNSFPLGNNIPTNIN) shows a compositional bias: polar residues. Disordered stretches follow at residues 1 to 67 (MSTN…NGIG), 83 to 306 (PPLP…NKWT), 450 to 470 (SHDI…NKNK), 486 to 571 (QKLK…TERK), 585 to 681 (RKER…NDSY), 741 to 767 (GETF…KKIE), 862 to 881 (QTTK…AETE), and 963 to 1102 (KDNP…SNSL). Low complexity-rich tracts occupy residues 52-67 (NNSN…NGIG), 90-162 (SSSS…QQEP), 191-226 (PSTP…SNNS), and 239-263 (NNNN…NNNN). The segment covering 268–280 (VIDDDDDDDDDEG) has biased composition (acidic residues). Polar residues predominate over residues 282-294 (SIKSTHTSTQSTP). Basic and acidic residues predominate over residues 295–304 (IRDRRQRDNK). The span at 453–464 (INNNNNNNNNNK) shows a compositional bias: low complexity. The segment covering 585 to 679 (RKERERKERK…IEKERREKND (95 aa)) has biased composition (basic and acidic residues). The required for interaction with nucleosomes and DNA stretch occupies residues 625-639 (KKKEKEKEKEKEKEK). Composition is skewed to low complexity over residues 750 to 763 (NNNN…NNNN), 862 to 877 (QTTK…TTTT), 972 to 1011 (NNNR…RNNN), and 1020 to 1067 (NNNN…NNTI). Residues 1069–1080 (KKIETIKKDINK) are compositionally biased toward basic and acidic residues. Low complexity predominate over residues 1084-1102 (KTTTTTSSSSSSTSSSNSL). The region spanning 1125–1446 (FDVGIGVPVT…KDSDIVTDQT (322 aa)) is the DOT1 domain. Residues 1251 to 1254 (YGEA), 1274 to 1283 (FCDIGCGIGN), and glutamate 1300 contribute to the S-adenosyl-L-methionine site. 5 disordered regions span residues 1463–1559 (LQLF…NKPI), 1610–1661 (RISP…SSND), 1735–1762 (HQKS…KKEQ), 1772–1791 (NYNN…NHNN), and 1799–1845 (TDLI…DNNK). 3 stretches are compositionally biased toward low complexity: residues 1467–1522 (SSSS…TPNS), 1541–1556 (NNNN…NSNN), and 1610–1642 (RISP…SSSD). Residues 1643–1656 (NENDDDNGDDEDDS) show a composition bias toward acidic residues. Residues 1745–1759 (RLSRKQKKLAKKNKK) show a composition bias toward basic residues. 2 stretches are compositionally biased toward low complexity: residues 1799 to 1817 (TDLI…INND) and 1835 to 1845 (KDYNNINDNNK).

Belongs to the class I-like SAM-binding methyltransferase superfamily. DOT1 family.

Its subcellular location is the nucleus. The catalysed reaction is L-lysyl(79)-[histone H3] + 3 S-adenosyl-L-methionine = N(6),N(6),N(6)-trimethyl-L-lysyl(79)-[histone H3] + 3 S-adenosyl-L-homocysteine + 3 H(+). Functionally, histone methyltransferase that specifically methylates histone H3 to form H3K79me. This methylation is required for telomere silencing, correct growth and development, and for resistance to DNA damage induced by UV LIGHT. The protein is Histone-lysine N-methyltransferase, H3 lysine-79 specific of Dictyostelium discoideum (Social amoeba).